The primary structure comprises 183 residues: MLTMDDIVREGHPALREVATEVTFPLSDEEKKLGRDMLEFLINSQDEEMAEKYGLRGGVGIAAPQLAVTKRFLAIHVHDEKDRLYSYVLYNPKIRSHSVQQACLSGGEGCLSVDREVPGYVVRSERVTIDAFDENGTPLKLRFKDYPAIVIQHEIDHLNGIMFYDHINKENPSYLPPDVDVFG.

Fe cation-binding residues include Cys-110 and His-153. The active site involves Glu-154. His-157 serves as a coordination point for Fe cation.

It belongs to the polypeptide deformylase family. It depends on Fe(2+) as a cofactor.

The catalysed reaction is N-terminal N-formyl-L-methionyl-[peptide] + H2O = N-terminal L-methionyl-[peptide] + formate. Removes the formyl group from the N-terminal Met of newly synthesized proteins. Requires at least a dipeptide for an efficient rate of reaction. N-terminal L-methionine is a prerequisite for activity but the enzyme has broad specificity at other positions. The chain is Peptide deformylase from Listeria monocytogenes serotype 4a (strain HCC23).